Consider the following 34-residue polypeptide: Brevinin-2Rf (34 aa).

Cys-28 and Cys-34 form a disulfide bridge.

Expressed by the skin glands.

It localises to the secreted. Its function is as follows. Antimicrobial peptide. This chain is Brevinin-2Rf, found in Pelophylax ridibundus (Marsh frog).